The primary structure comprises 425 residues: Glutamate-1-semialdehyde 2,1-aminomutase (425 aa).

The residue at position 265 (lysine 265) is an N6-(pyridoxal phosphate)lysine.

This sequence belongs to the class-III pyridoxal-phosphate-dependent aminotransferase family. HemL subfamily. In terms of assembly, homodimer. Pyridoxal 5'-phosphate is required as a cofactor.

The protein resides in the cytoplasm. The catalysed reaction is (S)-4-amino-5-oxopentanoate = 5-aminolevulinate. The protein operates within porphyrin-containing compound metabolism; protoporphyrin-IX biosynthesis; 5-aminolevulinate from L-glutamyl-tRNA(Glu): step 2/2. In Clostridium perfringens (strain SM101 / Type A), this protein is Glutamate-1-semialdehyde 2,1-aminomutase.